A 148-amino-acid chain; its full sequence is Oleosin 1 (148 aa).

An N-acetylalanine modification is found at Ala-2. Residues 2–28 (ADQHFQQPLHFQGSYGQQQPRSYQVAK) form a polar region. The segment at 29-148 (AATAVTAGGS…HVPSGQQQSS (120 aa)) is hydrophobic. Transmembrane regions (helical) follow at residues 37–57 (GSLL…LTIA) and 81–101 (GFLT…WIYK).

It belongs to the oleosin family.

The protein resides in the lipid droplet. The protein localises to the membrane. Its function is as follows. May have a structural role to stabilize the lipid body during desiccation of the seed by preventing coalescence of the oil. Probably interacts with both lipid and phospholipid moieties of lipid bodies. May also provide recognition signals for specific lipase anchorage in lipolysis during seedling growth. This chain is Oleosin 1 (OLE1), found in Prunus dulcis (Almond).